The primary structure comprises 127 residues: Fumarate reductase subunit C (127 aa).

The next 3 helical transmembrane spans lie at 30–50 (ATVL…GSLV), 67–87 (LVIA…QTFF), and 107–127 (IIVL…LIVV).

This sequence belongs to the FrdC family. As to quaternary structure, part of an enzyme complex containing four subunits: a flavoprotein (FrdA), an iron-sulfur protein (FrdB), and two hydrophobic anchor proteins (FrdC and FrdD).

It is found in the cell inner membrane. In terms of biological role, anchors the catalytic components of the fumarate reductase complex to the cell membrane, binds quinones. In Vibrio cholerae serotype O1 (strain ATCC 39541 / Classical Ogawa 395 / O395), this protein is Fumarate reductase subunit C.